A 347-amino-acid polypeptide reads, in one-letter code: SCA7 domain-containing protein SELMODRAFT_439258 (347 aa).

The first 13 residues, 1 to 13 (MCFFLSSLCPVVA), serve as a signal peptide directing secretion. The interval 77 to 106 (RAEVGGTGPKVGRPRKLSVYNPREMSDGNP) is disordered. The 68-residue stretch at 134–201 (QHLPFTVDDL…NNSRKSQQAD (68 aa)) folds into the SCA7 domain.

The polypeptide is SCA7 domain-containing protein SELMODRAFT_439258 (Selaginella moellendorffii (Spikemoss)).